Here is a 353-residue protein sequence, read N- to C-terminus: E3 ubiquitin-protein ligase TRIM63 (353 aa).

An RING-type zinc finger spans residues 23–79 (CPICLEMFTKPVVILPCQHNLCRKCANDIFQAANPYWTSRGSSVSMSGGRFRCPTCR). Residues 74-218 (RCPTCRHEVI…LSQKFDTLYA (145 aa)) are interaction with TTN. Residues 117 to 159 (GSHPMCKEHEDEKINIYCLTCEVPTCSMCKVFGIHKACEVAPL) form a B box-type zinc finger. Positions 122, 125, 145, and 151 each coordinate Zn(2+). The stretch at 207–269 (EELSQKFDTL…VETAIQSLDE (63 aa)) forms a coiled coil. Residues 267-325 (LDEPGGATFLLTAKQLIKSIVEASKGCQLGKTEQGFENMDFFTLDLEHIADALRAIDFG) enclose the COS domain. Residues 326 to 344 (TDEEEEEFIEEEDQEEEES) show a composition bias toward acidic residues. The tract at residues 326 to 353 (TDEEEEEFIEEEDQEEEESTEGKEEGHQ) is disordered.

In terms of assembly, homodimer. Homooligomer and heterooligomer. Interacts with SUMO2, titin/TTN and GMEB1. Interacts with TRIM54 and probably with TRIM55 and TNNI3. Forms a ternary complex with RACK1 and PRKCE. Interacts with CKM. Muscle specific. Selectively expressed in heart and skeletal muscle. Also expressed in the iris.

It is found in the cytoplasm. Its subcellular location is the nucleus. The protein localises to the myofibril. It localises to the sarcomere. The protein resides in the m line. It is found in the z line. It catalyses the reaction S-ubiquitinyl-[E2 ubiquitin-conjugating enzyme]-L-cysteine + [acceptor protein]-L-lysine = [E2 ubiquitin-conjugating enzyme]-L-cysteine + N(6)-ubiquitinyl-[acceptor protein]-L-lysine.. The protein operates within protein modification; protein ubiquitination. In terms of biological role, E3 ubiquitin ligase. Mediates the ubiquitination and subsequent proteasomal degradation of CKM, GMEB1 and HIBADH. Regulates the proteasomal degradation of muscle proteins under amino acid starvation, where muscle protein is catabolized to provide other organs with amino acids. Inhibits de novo skeletal muscle protein synthesis under amino acid starvation. Regulates proteasomal degradation of cardiac troponin I/TNNI3 and probably of other sarcomeric-associated proteins. May play a role in striated muscle atrophy and hypertrophy by regulating an anti-hypertrophic PKC-mediated signaling pathway. May regulate the organization of myofibrils through TTN in muscle cells. The protein is E3 ubiquitin-protein ligase TRIM63 (TRIM63) of Homo sapiens (Human).